The following is a 235-amino-acid chain: tRNA (guanine-N(1)-)-methyltransferase (235 aa).

S-adenosyl-L-methionine contacts are provided by residues Gly-112 and Ile-132–Ile-137.

The protein belongs to the RNA methyltransferase TrmD family. Homodimer.

It is found in the cytoplasm. It carries out the reaction guanosine(37) in tRNA + S-adenosyl-L-methionine = N(1)-methylguanosine(37) in tRNA + S-adenosyl-L-homocysteine + H(+). Specifically methylates guanosine-37 in various tRNAs. This chain is tRNA (guanine-N(1)-)-methyltransferase, found in Anaplasma marginale (strain St. Maries).